We begin with the raw amino-acid sequence, 312 residues long: Olfactory receptor 5p57 (312 aa).

At 1 to 25 the chain is on the extracellular side; that stretch reads MEPGNYTVVTEFILLGLTDDITVSV. Asn5 carries an N-linked (GlcNAc...) asparagine glycan. Residues 26 to 46 traverse the membrane as a helical segment; the sequence is ILFVMFLIVYSVTLMGNLNII. Topologically, residues 47–54 are cytoplasmic; that stretch reads VLIRTSPQ. A helical transmembrane segment spans residues 55-75; sequence LHTPMYLFLSHLAFLDIGYSS. Residues 76–99 lie on the Extracellular side of the membrane; the sequence is SVTPIMLRGFLRKGTFIPVAGCVA. Cys97 and Cys189 are oxidised to a cystine. The chain crosses the membrane as a helical span at residues 100-120; it reads QLCIVVAFGTSESFLLASMAY. The Cytoplasmic segment spans residues 121–133; it reads DRYVAICSPLLYS. The helical transmembrane segment at 134–154 threads the bilayer; it reads TQMSSTVCILLVGTSYLGGWV. Residues 155–196 lie on the Extracellular side of the membrane; it reads NAWIFTGCSLNLSFCGPNKINHFFCDYSPLLKLSCSHDFSFE. Residue Asn165 is glycosylated (N-linked (GlcNAc...) asparagine). A helical membrane pass occupies residues 197–217; sequence VIPAISSGSIIVVTVFIIALS. Topologically, residues 218–237 are cytoplasmic; that stretch reads YVYILVSILKMRSTEGRQKA. Residues 238–258 traverse the membrane as a helical segment; it reads FSTCTSHLTAVTLFFGTITFI. Residues 259 to 271 are Extracellular-facing; sequence YVMPQSSYSTDQN. The chain crosses the membrane as a helical span at residues 272–292; that stretch reads KVVSVFYTVVIPMLNPLIYSF. Residues 293-312 lie on the Cytoplasmic side of the membrane; the sequence is RNKEVKEAMKKLIAKTHWWS.

Belongs to the G-protein coupled receptor 1 family.

It is found in the cell membrane. Probable odorant receptor, which recognizes only aliphatic alcohols, suggesting that it may convey a 'woody' or 'sweet' sour. The polypeptide is Olfactory receptor 5p57 (Mus musculus (Mouse)).